The sequence spans 161 residues: Phosphopantetheine adenylyltransferase (161 aa).

Ser-9 provides a ligand contact to substrate. ATP contacts are provided by residues Ser-9–Phe-10 and His-17. Substrate contacts are provided by Lys-41, Leu-73, and Arg-87. Residues Gly-88 to Arg-90, Glu-98, and Thr-123 to Thr-129 each bind ATP.

It belongs to the bacterial CoaD family. Homohexamer. It depends on Mg(2+) as a cofactor.

Its subcellular location is the cytoplasm. The catalysed reaction is (R)-4'-phosphopantetheine + ATP + H(+) = 3'-dephospho-CoA + diphosphate. The protein operates within cofactor biosynthesis; coenzyme A biosynthesis; CoA from (R)-pantothenate: step 4/5. In terms of biological role, reversibly transfers an adenylyl group from ATP to 4'-phosphopantetheine, yielding dephospho-CoA (dPCoA) and pyrophosphate. The polypeptide is Phosphopantetheine adenylyltransferase (Psychromonas ingrahamii (strain DSM 17664 / CCUG 51855 / 37)).